Here is a 255-residue protein sequence, read N- to C-terminus: 2-succinyl-6-hydroxy-2,4-cyclohexadiene-1-carboxylate synthase (255 aa).

It belongs to the AB hydrolase superfamily. MenH family. Monomer.

It catalyses the reaction 5-enolpyruvoyl-6-hydroxy-2-succinyl-cyclohex-3-ene-1-carboxylate = (1R,6R)-6-hydroxy-2-succinyl-cyclohexa-2,4-diene-1-carboxylate + pyruvate. It functions in the pathway quinol/quinone metabolism; 1,4-dihydroxy-2-naphthoate biosynthesis; 1,4-dihydroxy-2-naphthoate from chorismate: step 3/7. It participates in quinol/quinone metabolism; menaquinone biosynthesis. Its function is as follows. Catalyzes a proton abstraction reaction that results in 2,5-elimination of pyruvate from 2-succinyl-5-enolpyruvyl-6-hydroxy-3-cyclohexene-1-carboxylate (SEPHCHC) and the formation of 2-succinyl-6-hydroxy-2,4-cyclohexadiene-1-carboxylate (SHCHC). The chain is 2-succinyl-6-hydroxy-2,4-cyclohexadiene-1-carboxylate synthase from Serratia proteamaculans (strain 568).